The following is a 296-amino-acid chain: Glycine--tRNA ligase alpha subunit (296 aa).

It belongs to the class-II aminoacyl-tRNA synthetase family. As to quaternary structure, tetramer of two alpha and two beta subunits.

Its subcellular location is the cytoplasm. It carries out the reaction tRNA(Gly) + glycine + ATP = glycyl-tRNA(Gly) + AMP + diphosphate. In Francisella philomiragia subsp. philomiragia (strain ATCC 25017 / CCUG 19701 / FSC 153 / O#319-036), this protein is Glycine--tRNA ligase alpha subunit.